A 917-amino-acid chain; its full sequence is Gamma-tubulin complex component 3 (917 aa).

The protein belongs to the TUBGCP family. Gamma-tubulin small complex (Gamma TuSC) is a heterotetrameric complex which contains two molecules of gamma-tubulin, and one molecule each of Dgrip84 and Dgrip91. The gamma-tubulin in this complex binds preferentially to GDP over GTP.

It is found in the cytoplasm. The protein resides in the cytoskeleton. The protein localises to the microtubule organizing center. It localises to the centrosome. Its subcellular location is the perinuclear region. This Drosophila melanogaster (Fruit fly) protein is Gamma-tubulin complex component 3.